The primary structure comprises 887 residues: Alanine--tRNA ligase (887 aa).

Zn(2+)-binding residues include His581, His585, Cys683, and His687.

It belongs to the class-II aminoacyl-tRNA synthetase family. It depends on Zn(2+) as a cofactor.

The protein localises to the cytoplasm. It catalyses the reaction tRNA(Ala) + L-alanine + ATP = L-alanyl-tRNA(Ala) + AMP + diphosphate. In terms of biological role, catalyzes the attachment of alanine to tRNA(Ala) in a two-step reaction: alanine is first activated by ATP to form Ala-AMP and then transferred to the acceptor end of tRNA(Ala). Also edits incorrectly charged Ser-tRNA(Ala) and Gly-tRNA(Ala) via its editing domain. This Ehrlichia ruminantium (strain Welgevonden) protein is Alanine--tRNA ligase.